A 68-amino-acid polypeptide reads, in one-letter code: Large ribosomal subunit protein uL29 (68 aa).

It belongs to the universal ribosomal protein uL29 family.

This is Large ribosomal subunit protein uL29 from Streptococcus pneumoniae (strain JJA).